Consider the following 152-residue polypeptide: Ribonuclease H (152 aa).

One can recognise an RNase H type-1 domain in the interval 1 to 142 (MDSKVVIYTD…ADKLAVQGRE (142 aa)). Mg(2+) contacts are provided by D10, E48, D70, and D134.

Belongs to the RNase H family. In terms of assembly, monomer. Mg(2+) serves as cofactor.

The protein localises to the cytoplasm. The enzyme catalyses Endonucleolytic cleavage to 5'-phosphomonoester.. Endonuclease that specifically degrades the RNA of RNA-DNA hybrids. This Rickettsia typhi (strain ATCC VR-144 / Wilmington) protein is Ribonuclease H.